A 551-amino-acid chain; its full sequence is MPYNPLYESLSNQFDPSRIETVLDPMGYTIKRRALPVSLTIAGSDCSGGAGIQADLKTMTSLGVYGMSAITCLVAENAGGVDSVEEMSPAFVESQIDCCIRDIPCHVVKTGMLGSPEIVKAVARSAKKFNFSKLVVDPVMVATSGDSLVTKDIVSVLNEELLPLTYLVTPNIPEAIVLAKNQGLDISNINSVSDMERCAAVIHKLGPKHVLLKGGHMPVNNLGLKSSDDEDLRVVDILYDGNRFYHFSSSYLKKGEVHGTGCTLSSAIASFLAWEHSLTEAVQFGIDYVHGAITHSPPINNCSTNILNHMTRLRIVPFAPGHFIEYILSHPQVVPAWKEYINHKFTNMLAKGTLPLPAFQDYLKQDYLYLVNFARAYSLKGYKENTFPNILEAAQSVIHVIEEKELHVSMCSSYGVSLQDLKSCEESPACTAYSRYILDTGAAQDVAALDFVQAPCLIGYYVIAARLMKEPFRNPQGPYQKWVDNYFCEDYLSAVRRGCRQIEEIVLKLSPERIQELIEIFIRATKFETLFWETPYYEYVTKQNLEDKEFS.

Residue E76 participates in 4-amino-5-hydroxymethyl-2-methylpyrimidine binding.

In the N-terminal section; belongs to the ThiD family. The protein in the C-terminal section; belongs to the thiaminase-2 family.

The protein localises to the cytoplasm. It carries out the reaction 4-amino-5-hydroxymethyl-2-methylpyrimidine + ATP = 4-amino-2-methyl-5-(phosphooxymethyl)pyrimidine + ADP + H(+). The catalysed reaction is 4-amino-2-methyl-5-(phosphooxymethyl)pyrimidine + ATP = 4-amino-2-methyl-5-(diphosphooxymethyl)pyrimidine + ADP. It participates in cofactor biosynthesis; thiamine diphosphate biosynthesis; 4-amino-2-methyl-5-diphosphomethylpyrimidine from 5-amino-1-(5-phospho-D-ribosyl)imidazole: step 2/3. The protein operates within cofactor biosynthesis; thiamine diphosphate biosynthesis; 4-amino-2-methyl-5-diphosphomethylpyrimidine from 5-amino-1-(5-phospho-D-ribosyl)imidazole: step 3/3. In terms of biological role, catalyzes the phosphorylation of hydroxymethylpyrimidine phosphate (HMP-P) to HMP-PP, and of HMP to HMP-P. The sequence is that of Putative hydroxymethylpyrimidine/phosphomethylpyrimidine kinase 2 from Schizosaccharomyces pombe (strain 972 / ATCC 24843) (Fission yeast).